The chain runs to 269 residues: Shikimate dehydrogenase (NADP(+)) (269 aa).

Residues Thr-22–Ser-24 and Thr-68 each bind shikimate. Catalysis depends on Lys-72, which acts as the Proton acceptor. Shikimate-binding residues include Asn-93 and Asp-104. NADP(+) is bound by residues Gly-128 to Ala-132, Asn-152 to Arg-157, and Phe-210. Tyr-212 is a binding site for shikimate. Gly-233 is an NADP(+) binding site.

Belongs to the shikimate dehydrogenase family. In terms of assembly, homodimer.

The catalysed reaction is shikimate + NADP(+) = 3-dehydroshikimate + NADPH + H(+). It participates in metabolic intermediate biosynthesis; chorismate biosynthesis; chorismate from D-erythrose 4-phosphate and phosphoenolpyruvate: step 4/7. Involved in the biosynthesis of the chorismate, which leads to the biosynthesis of aromatic amino acids. Catalyzes the reversible NADPH linked reduction of 3-dehydroshikimate (DHSA) to yield shikimate (SA). This Saccharolobus solfataricus (strain ATCC 35092 / DSM 1617 / JCM 11322 / P2) (Sulfolobus solfataricus) protein is Shikimate dehydrogenase (NADP(+)).